Consider the following 487-residue polypeptide: Probable aspartic-type endopeptidase opsB (487 aa).

Residues 1–20 (MQKSWLVLLVACLGLQGTTA) form the signal peptide. The Peptidase A1 domain maps to 69-398 (YFCNITLGTP…DLSNNEISLA (330 aa)). N72 carries an N-linked (GlcNAc...) asparagine glycan. D87 is an active-site residue. 4 N-linked (GlcNAc...) asparagine glycosylation sites follow: N99, N111, N132, and N272. The active site involves D286. Residues N329 and N403 are each glycosylated (N-linked (GlcNAc...) asparagine). A463 carries the GPI-anchor amidated alanine lipid modification. A propeptide spans 464–487 (PAGPTDVPKHLVLGAAAIGYVLAF) (removed in mature form).

This sequence belongs to the peptidase A1 family.

It localises to the cell membrane. In terms of biological role, probable GPI-anchored aspartic-type endopeptidase. This chain is Probable aspartic-type endopeptidase opsB (opsB), found in Aspergillus oryzae (strain ATCC 42149 / RIB 40) (Yellow koji mold).